The following is a 256-amino-acid chain: Short-chain dehydrogenase/reductase cdmF (256 aa).

NADP(+) is bound by residues V11, D57, and R119. S137 functions as the Proton donor in the catalytic mechanism. NADP(+) is bound by residues Y151, K155, G183, and N187. Y151 serves as the catalytic Proton acceptor. K155 serves as the catalytic Lowers pKa of active site Tyr.

It belongs to the short-chain dehydrogenases/reductases (SDR) family.

It carries out the reaction 3-hydroxypentacecilide A + A = chrodrimanin C + AH2. The enzyme catalyses chrodrimanin F + A = chrodrimanin H + AH2. The protein operates within secondary metabolite biosynthesis; terpenoid biosynthesis. Functionally, short-chain dehydrogenase/reductase; part of the gene cluster that mediates the biosynthesis of chrodrimanin B, a meroterpenoid that acts as a potent blocker of insect GABA-gated chloride channels. The first step of the pathway is the biosynthesis of 6-hydroxymellein by the polyketide synthase cdmE. The prenyltransferase cdmH acts as a 6-hydroxymellein 5-farnesyltransferase and produces the hydrophobic metabolite verruculide C. The FAD-dependent monooxygenase cdmI further converts verruculide C into verruculide B. The terpene cyclase cdmG then produced the pentacyclic molecule 3-hydroxypentacecilide A, the backbone structure of chrodrimanin B, via folding the farnesyl moiety of the substrate into the chair-boat conformation. The short-chain dehydrogenase/reductase cdmF functions as the 3-OH dehydrogenase that oxidizes the C-3 hydroxyl group of 3-hydroxypentacecilide A and produces chrodrimanin C, the dehydrogenated product of 3-hydroxypentacecilide A. The cytochrome P450 monooxygenase cdmJ then accepts both 3-hydroxypentacecilide A and chrodrimanin C and functions as a C-7-beta-hydroxylase to produce respectively chrodrimanin H and chrodrimanin F. The dioxygenase cdmA accepts chrodrimanin H to afford chrodrimanin E, which is further transformed to chrodrimanin A by the dioxygenase cdmD. CdmA can also accept chrodrimanin C as substrate to convert it into verruculide A, which is further converted into chrodrimanin T by cdmD. The last step of the biosynthesis is proposed to be performed by the acetyltransferase cdmC which acetylates chrodrimanin A to yield chrodrimanin B. The pathway may also lead to the production of additional shunt products, including chrodrimanins T and U. In Talaromyces verruculosus (Penicillium verruculosum), this protein is Short-chain dehydrogenase/reductase cdmF.